The chain runs to 201 residues: Guanylate kinase (201 aa).

A Guanylate kinase-like domain is found at 2–180 (SCLFVISAPS…AARDVASIVQ (179 aa)). 9-16 (APSGAGKT) contacts ATP.

Belongs to the guanylate kinase family.

Its subcellular location is the cytoplasm. The enzyme catalyses GMP + ATP = GDP + ADP. Essential for recycling GMP and indirectly, cGMP. This chain is Guanylate kinase, found in Nitrosomonas europaea (strain ATCC 19718 / CIP 103999 / KCTC 2705 / NBRC 14298).